The sequence spans 1331 residues: Retrotransposon-like protein 1 (1331 aa).

4 disordered regions span residues 1–123 (MMEP…SQED), 128–147 (TDLAESEEDESPEEPDSSTV), 556–595 (EADEETSDQPSSDGSDDLSESEPSELQQAGDSDQSEETFY), and 971–1033 (PSSE…DEPN). Residues 19–30 (SSKQMESSEGSS) are compositionally biased toward low complexity. Acidic residues-rich tracts occupy residues 109 to 123 (EMEEEEDNPWESQED), 128 to 143 (TDLAESEEDESPEEPD), and 569 to 578 (GSDDLSESEP). Low complexity predominate over residues 992–1001 (RRVATTTRPT). Residues 1015-1024 (PESEDEEESE) show a composition bias toward acidic residues. 2 consecutive transmembrane segments (helical) span residues 1070–1090 (FYRSLLFWKNLLAMAALLVML) and 1117–1137 (LFLDASLLTSSGIATAVTQLF). Residues 1309–1331 (SPPREGATLEELPSDADEDAGLD) form a disordered region. Positions 1320-1331 (LPSDADEDAGLD) are enriched in acidic residues.

The protein resides in the membrane. Plays an essential role in capillaries endothelial cells for the maintenance of feto-maternal interface and for development of the placenta. This Bos taurus (Bovine) protein is Retrotransposon-like protein 1 (RTL1).